The sequence spans 938 residues: Isoleucine--tRNA ligase (938 aa).

A 'HIGH' region motif is present at residues 65–75; the sequence is PYANGSIHIGH. Glu-568 provides a ligand contact to L-isoleucyl-5'-AMP. Positions 609–613 match the 'KMSKS' region motif; it reads KMSKS. Lys-612 is a binding site for ATP. Residues Cys-905, Cys-908, Cys-921, and Cys-924 each coordinate Zn(2+).

Belongs to the class-I aminoacyl-tRNA synthetase family. IleS type 1 subfamily. As to quaternary structure, monomer. The cofactor is Zn(2+).

Its subcellular location is the cytoplasm. The catalysed reaction is tRNA(Ile) + L-isoleucine + ATP = L-isoleucyl-tRNA(Ile) + AMP + diphosphate. In terms of biological role, catalyzes the attachment of isoleucine to tRNA(Ile). As IleRS can inadvertently accommodate and process structurally similar amino acids such as valine, to avoid such errors it has two additional distinct tRNA(Ile)-dependent editing activities. One activity is designated as 'pretransfer' editing and involves the hydrolysis of activated Val-AMP. The other activity is designated 'posttransfer' editing and involves deacylation of mischarged Val-tRNA(Ile). The chain is Isoleucine--tRNA ligase from Mannheimia succiniciproducens (strain KCTC 0769BP / MBEL55E).